Here is a 508-residue protein sequence, read N- to C-terminus: Light-independent protochlorophyllide reductase subunit B (508 aa).

Residue aspartate 36 participates in [4Fe-4S] cluster binding. Residue aspartate 294 is the Proton donor of the active site. 429–430 contacts substrate; that stretch reads GM.

It belongs to the ChlB/BchB/BchZ family. As to quaternary structure, protochlorophyllide reductase is composed of three subunits; ChlL, ChlN and ChlB. Forms a heterotetramer of two ChlB and two ChlN subunits. Requires [4Fe-4S] cluster as cofactor.

It carries out the reaction chlorophyllide a + oxidized 2[4Fe-4S]-[ferredoxin] + 2 ADP + 2 phosphate = protochlorophyllide a + reduced 2[4Fe-4S]-[ferredoxin] + 2 ATP + 2 H2O. It functions in the pathway porphyrin-containing compound metabolism; chlorophyll biosynthesis (light-independent). Component of the dark-operative protochlorophyllide reductase (DPOR) that uses Mg-ATP and reduced ferredoxin to reduce ring D of protochlorophyllide (Pchlide) to form chlorophyllide a (Chlide). This reaction is light-independent. The NB-protein (ChlN-ChlB) is the catalytic component of the complex. The polypeptide is Light-independent protochlorophyllide reductase subunit B (Synechocystis sp. (strain ATCC 27184 / PCC 6803 / Kazusa)).